The following is a 608-amino-acid chain: MAAAAATAVGPGAGSAGVAGPGGAGPCATVSVFPGARLLTIGDANGEIQRHAEQQALRLEVRAGPDAAGIALYSHEDVCVFKCSVSRETECSRVGRQSFIITLGCNSVLIQFATPHDFCSFYNILKTCRGHTLERSVFSERTEESSAVQYFQFYGYLSQQQNMMQDYVRTGTYQRAILQNHTDFKDKIVLDVGCGSGILSFFAAQAGARKIYAVEASTMAQHAEVLVKSNNLTDRIVVIPGKVEEVSLPEQVDIIISEPMGYMLFNERMLESYLHAKKYLKPSGNMFPTIGDVHLAPFTDEQLYMEQFTKANFWYQPSFHGVDLSALRGAAVDEYFRQPVVDTFDIRILMAKSVKYTVNFLEAKEGDLHRIEIPFKFHMLHSGLVHGLAFWFDVAFIGSIMTVWLSTAPTEPLTHWYQVRCLFQSPLFAKAGDTLSGTCLLIANKRQSYDISIVAQVDQTGSKSSNLLDLKNPFFRYTGTTPSPPPGSHYTSPSENMWNTGSTYNLSSGVAVAGMPTAYDLSSVIAGGSSVGHNNLIPLANTGIVNHTHSRMGSIMSTGIVQGSSGAQGGGGSSSAHYAVNNQFTMGGPAISMASPMSIPTNTMHYGS.

The segment at 28–139 (ATVSVFPGAR…GHTLERSVFS (112 aa)) is interaction with C9orf72. The region spanning 147–454 (AVQYFQFYGY…KRQSYDISIV (308 aa)) is the SAM-dependent MTase PRMT-type domain. Positions 160, 169, 193, and 215 each coordinate S-adenosyl-L-methionine. Position 217 is a phosphoserine (serine 217). Residue lysine 228 forms a Glycyl lysine isopeptide (Lys-Gly) (interchain with G-Cter in ubiquitin) linkage. Positions 244 and 272 each coordinate S-adenosyl-L-methionine. The tract at residues 347-380 (RILMAKSVKYTVNFLEAKEGDLHRIEIPFKFHML) is required for nuclear translocation. Residues 500–608 (TGSTYNLSSG…IPTNTMHYGS (109 aa)) are transactivation domain. Arginine 551 carries the dimethylated arginine modification.

The protein belongs to the class I-like SAM-binding methyltransferase superfamily. Protein arginine N-methyltransferase family. In terms of assembly, homodimer. Interacts with NR1H4. Interacts with SNRPC. Interacts with the C-terminus of NCOA2/GRIP1, NCO3/ACTR and NCOA1/SRC1. Part of a complex consisting of CARM1, EP300/P300 and NCOA2/GRIP1. Interacts with FLII, TP53, myogenic factor MEF2, EP300/P300, TRIM24, CREBBP and CTNNB1. Interacts with RELA. Identified in a complex containing CARM1, TRIM24 and NCOA2/GRIP1. Interacts with NCOA3/SRC3. Interacts with SKP2. Interacts (via PH domain-like fold) with C9orf72. Interacts with PARP1; promoting PARP1 recruimtent to replication forks. In terms of processing, phosphorylation at Ser-217 is strongly increased during mitosis, and decreases rapidly to a very low, basal level after entry into the G1 phase of the cell cycle. Phosphorylation at Ser-217 interferes with S-adenosyl-L-methionine binding and strongly reduces methyltransferase activity. Phosphorylation at Ser-217 may promote cytosolic location. Post-translationally, auto-methylated on Arg-551. Methylation enhances transcription coactivator activity. Methylation is required for its role in the regulation of pre-mRNA alternative splicing. Ubiquitinated by E3 ubiquitin-protein ligase complex containing FBXO9 at Lys-228; leading to proteasomal degradation. As to expression, ubiquitously expressed. Within the brain, present in proliferating cells from lateral ventricular zone and dentate gyrus (at protein level).

Its subcellular location is the nucleus. The protein resides in the cytoplasm. It is found in the chromosome. The enzyme catalyses L-arginyl-[protein] + 2 S-adenosyl-L-methionine = N(omega),N(omega)-dimethyl-L-arginyl-[protein] + 2 S-adenosyl-L-homocysteine + 2 H(+). With respect to regulation, methylation of H3R17 (H3R17me) by CARM1 is stimulated by preacetylation of H3 'Lys-18' (H3K18ac) H3 'Lys-23' (H3K23ac) by EP300 and blocked by citrullination of H3 'Arg-17' (H3R17ci) by PADI4. In terms of biological role, methylates (mono- and asymmetric dimethylation) the guanidino nitrogens of arginyl residues in several proteins involved in DNA packaging, transcription regulation, pre-mRNA splicing, and mRNA stability. Recruited to promoters upon gene activation together with histone acetyltransferases from EP300/P300 and p160 families, methylates histone H3 at 'Arg-17' (H3R17me), forming mainly asymmetric dimethylarginine (H3R17me2a), leading to activation of transcription via chromatin remodeling. During nuclear hormone receptor activation and TCF7L2/TCF4 activation, acts synergically with EP300/P300 and either one of the p160 histone acetyltransferases NCOA1/SRC1, NCOA2/GRIP1 and NCOA3/ACTR or CTNNB1/beta-catenin to activate transcription. During myogenic transcriptional activation, acts together with NCOA3/ACTR as a coactivator for MEF2C. During monocyte inflammatory stimulation, acts together with EP300/P300 as a coactivator for NF-kappa-B. Acts as a coactivator for PPARG, promotes adipocyte differentiation and the accumulation of brown fat tissue. Plays a role in the regulation of pre-mRNA alternative splicing by methylation of splicing factors. Also seems to be involved in p53/TP53 transcriptional activation. Methylates EP300/P300, both at 'Arg-2142', which may loosen its interaction with NCOA2/GRIP1, and at 'Arg-580' and 'Arg-604' in the KIX domain, which impairs its interaction with CREB and inhibits CREB-dependent transcriptional activation. Also methylates arginine residues in RNA-binding proteins PABPC1, ELAVL1 and ELAV4, which may affect their mRNA-stabilizing properties and the half-life of their target mRNAs. Acts as a transcriptional coactivator of ACACA/acetyl-CoA carboxylase by enriching H3R17 methylation at its promoter, thereby positively regulating fatty acid synthesis. Independently of its methyltransferase activity, involved in replication fork progression: promotes PARP1 recruitment to replication forks, leading to poly-ADP-ribosylation of chromatin at replication forks and reduced fork speed. The polypeptide is Histone-arginine methyltransferase CARM1 (Carm1) (Mus musculus (Mouse)).